The chain runs to 261 residues: Carnitinyl-CoA dehydratase (261 aa).

Glutamate 111 (nucleophile) is an active-site residue. Catalysis depends on glutamate 131, which acts as the Proton acceptor.

This sequence belongs to the enoyl-CoA hydratase/isomerase family.

It carries out the reaction (R)-carnitinyl-CoA = crotonobetainyl-CoA + H2O. It functions in the pathway amine and polyamine metabolism; carnitine metabolism. Its function is as follows. Catalyzes the reversible dehydration of L-carnitinyl-CoA to crotonobetainyl-CoA. The chain is Carnitinyl-CoA dehydratase from Salmonella typhi.